Consider the following 458-residue polypeptide: Aldehyde dehydrogenase (458 aa).

Residues 134-135 (WN), 158-161 (KHAS), and 210-211 (GS) contribute to the NADP(+) site. The active-site Proton acceptor is the E232. Residue L233 participates in NADP(+) binding. The active-site Nucleophile is C266. E363 contacts NADP(+).

It belongs to the aldehyde dehydrogenase family. As to quaternary structure, monomer.

The enzyme catalyses an aldehyde + NAD(+) + H2O = a carboxylate + NADH + 2 H(+). The catalysed reaction is an aldehyde + NADP(+) + H2O = a carboxylate + NADPH + 2 H(+). It participates in carbohydrate metabolism; D-xylose degradation. Aldehyde dehydrogenase able to oxidize various aldehydes such as formaldehyde, glyceraldehyde, butyraldehyde, glutaraldehyde and benzaldehyde (in vitro). Is likely involved in the oxidative D-xylose degradation pathway, catalyzing the oxidation step of 2-oxoglutarate semialdehyde to 2-oxoglutarate. Is able to use both NAD(+) and NADP(+); however, shows a preference for NADP(+). Does not display succinate semialdehyde dehydrogenase activity. The protein is Aldehyde dehydrogenase (aldh) of Paenarthrobacter nicotinovorans (Arthrobacter nicotinovorans).